The following is a 416-amino-acid chain: Ferrochelatase, mitochondrial (416 aa).

A mitochondrion-targeting transit peptide spans 1–47 (MAAALRSAGVLLRDRLLYGGSRACQPRRCQSGAATAAAATETAQRAR). The segment at 41–62 (ETAQRARSPKPQAQPGNRKPRT) is disordered. K50 bears the N6-acetyllysine mark. Protoporphyrin IX is bound by residues R108, Y116, and S123. K131 is subject to N6-succinyllysine. Position 189 (C189) interacts with [2Fe-2S] cluster. H223 is a catalytic residue. K283 is modified (N6-acetyllysine; alternate). Residue K283 is modified to N6-succinyllysine; alternate. D376 is an active-site residue. Residues C396, C399, and C404 each coordinate [2Fe-2S] cluster. K408 bears the N6-acetyllysine; alternate mark. An N6-succinyllysine; alternate modification is found at K408.

The protein belongs to the ferrochelatase family. Homodimer. Homotetramer. Interaction with PGRMC1; the interaction results in decreased FECH activity. Interacts with ABCB10 and SLC25A37; this interaction forms an oligomeric complex. Forms a complex with ABCB7 and ABCB10, where a dimeric FECH bridges ABCB7 and ABCB10 homodimers; this complex may be required for cellular iron homeostasis, mitochondrial function and heme biosynthesis. Interacts with ABCB7 and ABCB10. Requires [2Fe-2S] cluster as cofactor.

Its subcellular location is the mitochondrion inner membrane. The catalysed reaction is heme b + 2 H(+) = protoporphyrin IX + Fe(2+). The protein operates within porphyrin-containing compound metabolism; protoheme biosynthesis; protoheme from protoporphyrin-IX: step 1/1. Its function is as follows. Catalyzes the ferrous insertion into protoporphyrin IX and participates in the terminal step in the heme biosynthetic pathway. The polypeptide is Ferrochelatase, mitochondrial (Bos taurus (Bovine)).